We begin with the raw amino-acid sequence, 133 residues long: Urease subunit beta (133 aa).

Residues 106 to 133 form a disordered region; sequence VFRPNDSNQNAAVKNDAGEDNANKKGGK.

It belongs to the urease beta subunit family. In terms of assembly, heterotrimer of UreA (gamma), UreB (beta) and UreC (alpha) subunits. Three heterotrimers associate to form the active enzyme.

It localises to the cytoplasm. The enzyme catalyses urea + 2 H2O + H(+) = hydrogencarbonate + 2 NH4(+). Its pathway is nitrogen metabolism; urea degradation; CO(2) and NH(3) from urea (urease route): step 1/1. This Staphylococcus epidermidis (strain ATCC 12228 / FDA PCI 1200) protein is Urease subunit beta.